We begin with the raw amino-acid sequence, 398 residues long: Acetate kinase (398 aa).

Asn-7 is a Mg(2+) binding site. Lys-14 is an ATP binding site. Arg-91 is a substrate binding site. Catalysis depends on Asp-148, which acts as the Proton donor/acceptor. Residues 208–212, 283–285, and 331–335 each bind ATP; these read HLGNG, DFR, and GLGEN. Glu-384 is a binding site for Mg(2+).

The protein belongs to the acetokinase family. In terms of assembly, homodimer. Requires Mg(2+) as cofactor. Mn(2+) serves as cofactor.

The protein resides in the cytoplasm. The catalysed reaction is acetate + ATP = acetyl phosphate + ADP. The protein operates within metabolic intermediate biosynthesis; acetyl-CoA biosynthesis; acetyl-CoA from acetate: step 1/2. Functionally, catalyzes the formation of acetyl phosphate from acetate and ATP. Can also catalyze the reverse reaction. The chain is Acetate kinase from Natranaerobius thermophilus (strain ATCC BAA-1301 / DSM 18059 / JW/NM-WN-LF).